The following is a 166-amino-acid chain: Kelch repeat protein B10 (166 aa).

Kelch repeat units lie at residues 25 to 76 (TIFV…STFG) and 77 to 129 (MLYF…KLNN).

Belongs to the poxviruses Kelch family.

This chain is Kelch repeat protein B10, found in Oryctolagus cuniculus (Rabbit).